We begin with the raw amino-acid sequence, 1434 residues long: DNA-directed RNA polymerase subunit beta' (1434 aa).

Zn(2+) contacts are provided by Cys70, Cys72, Cys85, and Cys88. Residues Asp460, Asp462, and Asp464 each contribute to the Mg(2+) site. Positions 840, 915, 922, and 925 each coordinate Zn(2+).

Belongs to the RNA polymerase beta' chain family. As to quaternary structure, the RNAP catalytic core consists of 2 alpha, 1 beta, 1 beta' and 1 omega subunit. When a sigma factor is associated with the core the holoenzyme is formed, which can initiate transcription. Mg(2+) serves as cofactor. The cofactor is Zn(2+).

It catalyses the reaction RNA(n) + a ribonucleoside 5'-triphosphate = RNA(n+1) + diphosphate. DNA-dependent RNA polymerase catalyzes the transcription of DNA into RNA using the four ribonucleoside triphosphates as substrates. This chain is DNA-directed RNA polymerase subunit beta', found in Aeromonas hydrophila subsp. hydrophila (strain ATCC 7966 / DSM 30187 / BCRC 13018 / CCUG 14551 / JCM 1027 / KCTC 2358 / NCIMB 9240 / NCTC 8049).